The sequence spans 152 residues: Urease accessory protein UreE (152 aa).

The protein belongs to the UreE family.

The protein resides in the cytoplasm. Involved in urease metallocenter assembly. Binds nickel. Probably functions as a nickel donor during metallocenter assembly. The polypeptide is Urease accessory protein UreE (Citrobacter koseri (strain ATCC BAA-895 / CDC 4225-83 / SGSC4696)).